Here is a 481-residue protein sequence, read N- to C-terminus: UDP-N-acetylmuramoyl-L-alanyl-D-glutamate--L-lysine ligase (481 aa).

Ser-42 contributes to the UDP-N-acetyl-alpha-D-muramoyl-L-alanyl-D-glutamate binding site. An ATP-binding site is contributed by 118 to 124 (GTKGKTT). Residues 160-161 (TT), Ser-187, and Arg-195 each bind UDP-N-acetyl-alpha-D-muramoyl-L-alanyl-D-glutamate. Residue Lys-229 is modified to N6-carboxylysine. Positions 404–407 (DDPN) match the L-lysine recognition motif motif.

It belongs to the MurCDEF family. MurE subfamily. Carboxylation is probably crucial for Mg(2+) binding and, consequently, for the gamma-phosphate positioning of ATP.

It localises to the cytoplasm. It catalyses the reaction UDP-N-acetyl-alpha-D-muramoyl-L-alanyl-D-glutamate + L-lysine + ATP = UDP-N-acetyl-alpha-D-muramoyl-L-alanyl-gamma-D-glutamyl-L-lysine + ADP + phosphate + H(+). It participates in cell wall biogenesis; peptidoglycan biosynthesis. Catalyzes the addition of L-lysine to the nucleotide precursor UDP-N-acetylmuramoyl-L-alanyl-D-glutamate (UMAG) in the biosynthesis of bacterial cell-wall peptidoglycan. The protein is UDP-N-acetylmuramoyl-L-alanyl-D-glutamate--L-lysine ligase of Streptococcus sanguinis (strain SK36).